We begin with the raw amino-acid sequence, 530 residues long: T-complex protein 1 subunit gamma (530 aa).

Belongs to the TCP-1 chaperonin family. Heterooligomeric complex of about 850 to 900 kDa that forms two stacked rings, 12 to 16 nm in diameter.

It localises to the cytoplasm. In terms of biological role, molecular chaperone; assists the folding of proteins upon ATP hydrolysis. Known to play a role, in vitro, in the folding of actin and tubulin. This Dictyostelium discoideum (Social amoeba) protein is T-complex protein 1 subunit gamma (cct3).